A 416-amino-acid chain; its full sequence is Probable cysteine desulfurase (416 aa).

Lys236 carries the post-translational modification N6-(pyridoxal phosphate)lysine. Cys374 (cysteine persulfide intermediate) is an active-site residue.

The protein belongs to the class-V pyridoxal-phosphate-dependent aminotransferase family. Csd subfamily. Requires pyridoxal 5'-phosphate as cofactor.

The enzyme catalyses (sulfur carrier)-H + L-cysteine = (sulfur carrier)-SH + L-alanine. Functionally, catalyzes the removal of elemental sulfur and selenium atoms from L-cysteine, L-cystine, L-selenocysteine, and L-selenocystine to produce L-alanine. This chain is Probable cysteine desulfurase (csd), found in Xylella fastidiosa (strain 9a5c).